A 288-amino-acid chain; its full sequence is MKQYLELVNEILKDGEKREDRTNTGTISKFGVQKRYDLREGFPLLTTKKVFYKAIFHEMLWFIKGDTNIKYLVENNVKIWNEWPYENFKKSSEFNNETLQEFVERLKNDNEFCNKWGDLGPVYGKQWRDFGGIDQFAKLINDIKKNPFSRRHIVSAWNPAEVDNMLLPPCHSFWQVYVSKDGWLDLQLYQRSGDVFLGVPFNIASYALLMELIAKECNLKARYFVHTIGDAHIYLNHLEQINEQLKRKPLPLCKIKINSEKSIFDIAFEDIEIEGYESHAKITGEVAV.

Residues R21 and 150 to 151 each bind dUMP; that span reads RR. The active-site Nucleophile is C170. Residues 191-194, N202, and 232-234 contribute to the dUMP site; these read RSGD and HIY. D194 contacts (6R)-5,10-methylene-5,6,7,8-tetrahydrofolate. A287 provides a ligand contact to (6R)-5,10-methylene-5,6,7,8-tetrahydrofolate.

This sequence belongs to the thymidylate synthase family. Bacterial-type ThyA subfamily. Homodimer.

Its subcellular location is the cytoplasm. The enzyme catalyses dUMP + (6R)-5,10-methylene-5,6,7,8-tetrahydrofolate = 7,8-dihydrofolate + dTMP. It participates in pyrimidine metabolism; dTTP biosynthesis. Functionally, catalyzes the reductive methylation of 2'-deoxyuridine-5'-monophosphate (dUMP) to 2'-deoxythymidine-5'-monophosphate (dTMP) while utilizing 5,10-methylenetetrahydrofolate (mTHF) as the methyl donor and reductant in the reaction, yielding dihydrofolate (DHF) as a by-product. This enzymatic reaction provides an intracellular de novo source of dTMP, an essential precursor for DNA biosynthesis. The chain is Thymidylate synthase from Mesoplasma florum (strain ATCC 33453 / NBRC 100688 / NCTC 11704 / L1) (Acholeplasma florum).